The sequence spans 156 residues: 6,7-dimethyl-8-ribityllumazine synthase (156 aa).

5-amino-6-(D-ribitylamino)uracil-binding positions include tryptophan 28, 60 to 62, and 82 to 84; these read SFE and VVV. Residue 87-88 coordinates (2S)-2-hydroxy-3-oxobutyl phosphate; sequence GT. The active-site Proton donor is the histidine 90. Phenylalanine 115 lines the 5-amino-6-(D-ribitylamino)uracil pocket. Position 129 (arginine 129) interacts with (2S)-2-hydroxy-3-oxobutyl phosphate.

This sequence belongs to the DMRL synthase family.

The catalysed reaction is (2S)-2-hydroxy-3-oxobutyl phosphate + 5-amino-6-(D-ribitylamino)uracil = 6,7-dimethyl-8-(1-D-ribityl)lumazine + phosphate + 2 H2O + H(+). The protein operates within cofactor biosynthesis; riboflavin biosynthesis; riboflavin from 2-hydroxy-3-oxobutyl phosphate and 5-amino-6-(D-ribitylamino)uracil: step 1/2. Functionally, catalyzes the formation of 6,7-dimethyl-8-ribityllumazine by condensation of 5-amino-6-(D-ribitylamino)uracil with 3,4-dihydroxy-2-butanone 4-phosphate. This is the penultimate step in the biosynthesis of riboflavin. The sequence is that of 6,7-dimethyl-8-ribityllumazine synthase from Kocuria rhizophila (strain ATCC 9341 / DSM 348 / NBRC 103217 / DC2201).